The primary structure comprises 263 residues: Phosphoinositide-3-kinase-interacting protein 1 (263 aa).

A signal peptide spans 1–21; the sequence is MLLAWVQAFLVSNMLLAEAYG. Residues 22–168 are Extracellular-facing; sequence SGGCFWDNGH…NSKEKKDLGT (147 aa). The Kringle domain occupies 24-101; sequence GCFWDNGHLY…EKRPCEDLRC (78 aa). 3 cysteine pairs are disulfide-bonded: C25-C101, C46-C82, and C70-C96. S39 carries an O-linked (GalNAc...) serine glycan. N66 carries an N-linked (GlcNAc...) (complex) asparagine glycan. Residues 169–189 form a helical membrane-spanning segment; sequence LGYVLGITMMVIIIAIGAGII. At 190–263 the chain is on the cytoplasmic side; sequence LGYSYKRGKD…LMGQAGTPGA (74 aa). The span at 242-251 shows a compositional bias: polar residues; that stretch reads QTPVDPQEGT. Residues 242–263 form a disordered region; that stretch reads QTPVDPQEGTTPLMGQAGTPGA.

Post-translationally, N- and O-glycosylated. O-glycosylated with core 1 or possibly core 8 glycans. N-glycan heterogeneity at Asn-66: dHex1Hex5HexNAc4 (major) and dHex1Hex6HexNAc5 (minor).

The protein localises to the cell membrane. In terms of biological role, negative regulator of hepatic phosphatidylinositol 3-kinase (PI3K) activity. This chain is Phosphoinositide-3-kinase-interacting protein 1 (PIK3IP1), found in Homo sapiens (Human).